The following is a 104-amino-acid chain: Putative thioredoxin-4 (104 aa).

One can recognise a Thioredoxin domain in the interval 2 to 104 (SKVTNVSINT…QLRKILDSMK (103 aa)). Catalysis depends on nucleophile residues C31 and C34. Residues C31 and C34 are joined by a disulfide bond.

The protein belongs to the thioredoxin family.

In terms of biological role, participates in various redox reactions through the reversible oxidation of its active center dithiol to a disulfide and catalyzes dithiol-disulfide exchange reactions. The polypeptide is Putative thioredoxin-4 (trxD) (Dictyostelium discoideum (Social amoeba)).